Consider the following 113-residue polypeptide: Large ribosomal subunit protein uL22 (113 aa).

Belongs to the universal ribosomal protein uL22 family. As to quaternary structure, part of the 50S ribosomal subunit.

This protein binds specifically to 23S rRNA; its binding is stimulated by other ribosomal proteins, e.g. L4, L17, and L20. It is important during the early stages of 50S assembly. It makes multiple contacts with different domains of the 23S rRNA in the assembled 50S subunit and ribosome. Its function is as follows. The globular domain of the protein is located near the polypeptide exit tunnel on the outside of the subunit, while an extended beta-hairpin is found that lines the wall of the exit tunnel in the center of the 70S ribosome. In Pelotomaculum thermopropionicum (strain DSM 13744 / JCM 10971 / SI), this protein is Large ribosomal subunit protein uL22.